A 1133-amino-acid chain; its full sequence is MKRKVQKIIDEAPLEENSPPRFFDSDVEADSKPNDLTAANSIVDLKTNSQHENANAAGKEYGDSGVSESWVLDFLSVTGEKTISEFLAQKIWKTSNGDLNVAVDMYFDESFNIKNSNPDSESQKDTDASLTQMDQLSNTVSVKDLSINRNTNKKALNAVSPSLNLSSNSSVQDVSIDKEEMMKKQSRNALTPLDFIMKKNELMKYIGCFGVEAYSTASGTRTLQAGERIYLERQKLSIKSQSRNSRKKSKLLSINSSCYSNIVRFCNSDHHEIGKLPTEVASVISTLMEQGFWSFEAICIYSDNIIRFGSNVTLQVYCFINVNHPSLNRSPFTLATNSMQEEEEHLKASFAQNKRDHLLRLFTWIALEPDLEDCNTKESIHIDDILKTSSLPEARDESNSDLTPSSTEDEEDVVSDQLAILYDKVKTSGAELPSAPKPSTFALDLREYQKQALYWMCCKEEGVQSDGSAPKLHPLWSRFRFPKDSEFPEFFKCSSDDDNTHFYVNLYTGETTMLFPNSMPYHRGGILADEMGLGKTIEVLSLIHSRPCFSTDEIPEAFRHSKPSLPVASRTTLVVAPMSLLDQWHSEACKVSQGTKFRSMIYYGSEKPLDLKSCVIDTSTAPLIIITSYGVLLSEFSQQSHSSGLFSVHWFRVVLDEGHNIRNRESKTAKACHSISSQNRWVITGTPIVNKLDDLYSLIKFMRYEPWCNYTYWQTFVSLPYQSKDVLKALNVVQSILEFLVLRRTKETKDRNGNSIVTLPPKTVKIEYLDFSDSERKIYDSLYTKAKSTVNANIVAGTLFRNYTTILGLLLRLRQACCDPVLLSNMTINSETFDDFEFSVEQFNSLINQFVVTGKPIPSDILKIDTLKSFEALITECPICCNEPIQNPLLLNCKHACCGDCLSEHIQYQKRRNIIPPLCHTCRQPFNEQDVYKPFFVKNNGTQSTLLVGEEVKWKYWNRLQSVKLNGLLGQLRQLTHSSEPEKVVIFSQFTTFLDIIADVLESEKMGYARFDGTMSQQMRSTALETFRNDPDVNVLIISLKAGGVGLNLTCANHVFIMDPWWSWSVEAQAIDRIHRLGQEKPVFVTRYIVRDTVEERMLKIQERKNFITGTLGMSEGKQQVQSIEDIKMLFEY.

Disordered stretches follow at residues 1–34 (MKRK…SKPN) and 392–413 (PEAR…EEDV). Position 18 is a phosphoserine (Ser18). Residues 516–705 (PNSMPYHRGG…YSLIKFMRYE (190 aa)) enclose the Helicase ATP-binding domain. 529-536 (DEMGLGKT) contacts ATP. The short motif at 656–659 (DEGH) is the DEGH box element. Residues 877–923 (CPICCNEPIQNPLLLNCKHACCGDCLSEHIQYQKRRNIIPPLCHTCR) form an RING-type zinc finger. The 155-residue stretch at 971-1125 (QLRQLTHSSE…EGKQQVQSIE (155 aa)) folds into the Helicase C-terminal domain.

Belongs to the SNF2/RAD54 helicase family.

Its subcellular location is the cytoplasm. It is found in the nucleus. In terms of biological role, probable helicase, member of the UBC2/RAD6 epistasis group. Functions with DNA repair protein rad18 in error-free postreplication DNA repair. Involved in the maintenance of wild-type rates of instability of simple repetitive sequences such as poly(GT) repeats. Plays a role in surviving topoisomerase-mediated DNA damage. The chain is DNA repair protein rad8 from Schizosaccharomyces pombe (strain 972 / ATCC 24843) (Fission yeast).